Reading from the N-terminus, the 187-residue chain is uncharacterized protein (187 aa).

Residues 127–172 (KQPQVTLTQLQEELDEAKTRLALKEKELLEALSEISKLRLQLSNQL) adopt a coiled-coil conformation.

This is an uncharacterized protein from Tomato torrado virus (isolate Solanum lycopersicum/Spain/PRIToTV0301/-) (ToTV).